Here is a 328-residue protein sequence, read N- to C-terminus: D-cysteine desulfhydrase (328 aa).

Lys-51 carries the post-translational modification N6-(pyridoxal phosphate)lysine.

It belongs to the ACC deaminase/D-cysteine desulfhydrase family. Homodimer. Pyridoxal 5'-phosphate is required as a cofactor.

The enzyme catalyses D-cysteine + H2O = hydrogen sulfide + pyruvate + NH4(+) + H(+). Catalyzes the alpha,beta-elimination reaction of D-cysteine and of several D-cysteine derivatives. It could be a defense mechanism against D-cysteine. The chain is D-cysteine desulfhydrase from Shigella sonnei (strain Ss046).